A 536-amino-acid chain; its full sequence is Glutamyl-tRNA(Gln) amidotransferase subunit B, mitochondrial (536 aa).

Residues M1–Y8 constitute a mitochondrion transit peptide.

It belongs to the GatB/GatE family. GatB subfamily. Subunit of the heterotrimeric GatFAB amidotransferase (AdT) complex, composed of A, B and F subunits.

It is found in the mitochondrion. It carries out the reaction L-glutamyl-tRNA(Gln) + L-glutamine + ATP + H2O = L-glutaminyl-tRNA(Gln) + L-glutamate + ADP + phosphate + H(+). Functionally, allows the formation of correctly charged Gln-tRNA(Gln) through the transamidation of misacylated Glu-tRNA(Gln) in the mitochondria. The reaction takes place in the presence of glutamine and ATP through an activated gamma-phospho-Glu-tRNA(Gln). In Eremothecium gossypii (strain ATCC 10895 / CBS 109.51 / FGSC 9923 / NRRL Y-1056) (Yeast), this protein is Glutamyl-tRNA(Gln) amidotransferase subunit B, mitochondrial.